Reading from the N-terminus, the 51-residue chain is Large ribosomal subunit protein eL39 (51 aa).

A disordered region spans residues 1–23; it reads MSALKKSFIKRKLAKKQKQNRPM. Positions 7–19 are enriched in basic residues; it reads SFIKRKLAKKQKQ.

This sequence belongs to the eukaryotic ribosomal protein eL39 family. Interacts with impact.

The polypeptide is Large ribosomal subunit protein eL39 (rpl-39) (Caenorhabditis elegans).